Consider the following 337-residue polypeptide: Anaerobic sulfite reductase subunit C (337 aa).

Cys-115, Cys-121, Cys-153, Cys-157, Cys-180, Cys-183, Cys-186, Cys-190, Cys-212, Cys-215, Cys-218, and Cys-222 together coordinate [4Fe-4S] cluster. Cys-157 serves as a coordination point for siroheme. 2 consecutive 4Fe-4S ferredoxin-type domains span residues 171 to 200 (AKMR…CLAL) and 203 to 232 (GKAV…RKPD).

This sequence belongs to the nitrite and sulfite reductase 4Fe-4S domain family. As to quaternary structure, the anaerobic sulfite reductase seems to consist of three subunits. It depends on [4Fe-4S] cluster as a cofactor. Siroheme is required as a cofactor.

The protein resides in the cytoplasm. It carries out the reaction hydrogen sulfide + 3 NAD(+) + 3 H2O = sulfite + 3 NADH + 4 H(+). It functions in the pathway sulfur metabolism; sulfite reduction. Its function is as follows. This enzyme catalyzes the hydrogen sulfide production from sulfite. It is strictly anaerobic. It is regulated by electron acceptors rather than by cysteine. This chain is Anaerobic sulfite reductase subunit C (asrC), found in Salmonella typhi.